The primary structure comprises 636 residues: Chaperone protein DnaK (636 aa).

Thr196 bears the Phosphothreonine; by autocatalysis mark. The interval 591–636 (LAEAMYKSSSQPGAQEAPPTDGQPKPDEKGKDNVVDAEFVDVDDKK) is disordered. The segment covering 614 to 624 (PKPDEKGKDNV) has biased composition (basic and acidic residues).

Belongs to the heat shock protein 70 family.

Functionally, acts as a chaperone. In Solibacter usitatus (strain Ellin6076), this protein is Chaperone protein DnaK.